The primary structure comprises 55 residues: Large ribosomal subunit protein bL33 (55 aa).

Belongs to the bacterial ribosomal protein bL33 family.

The protein is Large ribosomal subunit protein bL33 of Pectobacterium carotovorum subsp. carotovorum (strain PC1).